Here is a 189-residue protein sequence, read N- to C-terminus: uncharacterized protein (189 aa).

A compositionally biased stretch (basic and acidic residues) spans 1-15; sequence MDKHGVKTPLWRKEV. Residues 1-77 form a disordered region; it reads MDKHGVKTPL…SPLRQESSSQ (77 aa). Acidic residues-rich tracts occupy residues 16-29 and 46-56; these read EDPE…EDDS and SATETEEDSRD. Residues 65–77 are compositionally biased toward polar residues; the sequence is VSYSPLRQESSSQ.

This is an uncharacterized protein from Mus musculus (Mouse).